Reading from the N-terminus, the 238-residue chain is Fatty acid metabolism regulator protein (238 aa).

Positions 6-74 (QSPAGFAEEY…HGKPTKVNNF (69 aa)) constitute an HTH gntR-type domain. Residues 34–53 (ERELSELIGVTRTTLREVLQ) constitute a DNA-binding region (H-T-H motif).

Homodimer.

Its subcellular location is the cytoplasm. Its function is as follows. Multifunctional regulator of fatty acid metabolism. In Erwinia tasmaniensis (strain DSM 17950 / CFBP 7177 / CIP 109463 / NCPPB 4357 / Et1/99), this protein is Fatty acid metabolism regulator protein.